Reading from the N-terminus, the 93-residue chain is Small ribosomal subunit protein uS15c (93 aa).

The protein belongs to the universal ribosomal protein uS15 family. As to quaternary structure, part of the 30S ribosomal subunit.

The protein localises to the plastid. The protein resides in the chloroplast. The protein is Small ribosomal subunit protein uS15c (rps15) of Jasminum nudiflorum (Winter jasmine).